A 54-amino-acid polypeptide reads, in one-letter code: Ovomucoid (54 aa).

One can recognise a Kazal-like domain in the interval 4-54 (VDCSDYPKPVCSLEYMPLCGSDSKTYSNKCDFCNAFVDSNGTLSLSHFGKC). Cystine bridges form between cysteine 6–cysteine 36, cysteine 14–cysteine 33, and cysteine 22–cysteine 54. Residue asparagine 43 is glycosylated (N-linked (GlcNAc...) asparagine).

The protein resides in the secreted. The polypeptide is Ovomucoid (Circus aeruginosus (Western marsh harrier)).